The chain runs to 31 residues: Photosystem II reaction center protein T (31 aa).

Residues 3-23 (ALVYTFLLVTTLGILFFSIIF) form a helical membrane-spanning segment.

Belongs to the PsbT family. As to quaternary structure, PSII is composed of 1 copy each of membrane proteins PsbA, PsbB, PsbC, PsbD, PsbE, PsbF, PsbH, PsbI, PsbJ, PsbK, PsbL, PsbM, PsbT, PsbX, PsbY, PsbZ, Psb30/Ycf12, at least 3 peripheral proteins of the oxygen-evolving complex and a large number of cofactors. It forms dimeric complexes.

Its subcellular location is the plastid. The protein localises to the cyanelle thylakoid membrane. Its function is as follows. Found at the monomer-monomer interface of the photosystem II (PS II) dimer, plays a role in assembly and dimerization of PSII. PSII is a light-driven water plastoquinone oxidoreductase, using light energy to abstract electrons from H(2)O, generating a proton gradient subsequently used for ATP formation. The polypeptide is Photosystem II reaction center protein T (Cyanophora paradoxa).